A 209-amino-acid polypeptide reads, in one-letter code: Ribosomal RNA large subunit methyltransferase E (209 aa).

S-adenosyl-L-methionine contacts are provided by Gly-63, Trp-65, Asp-83, Asp-99, and Asp-124. The active-site Proton acceptor is Lys-164.

Belongs to the class I-like SAM-binding methyltransferase superfamily. RNA methyltransferase RlmE family.

It localises to the cytoplasm. It catalyses the reaction uridine(2552) in 23S rRNA + S-adenosyl-L-methionine = 2'-O-methyluridine(2552) in 23S rRNA + S-adenosyl-L-homocysteine + H(+). In terms of biological role, specifically methylates the uridine in position 2552 of 23S rRNA at the 2'-O position of the ribose in the fully assembled 50S ribosomal subunit. The sequence is that of Ribosomal RNA large subunit methyltransferase E from Cronobacter sakazakii (strain ATCC BAA-894) (Enterobacter sakazakii).